The sequence spans 285 residues: Probable endonuclease 4 (285 aa).

Zn(2+) contacts are provided by histidine 69, histidine 109, glutamate 145, aspartate 179, histidine 182, histidine 216, aspartate 229, histidine 231, and glutamate 261.

This sequence belongs to the AP endonuclease 2 family. Requires Zn(2+) as cofactor.

It catalyses the reaction Endonucleolytic cleavage to 5'-phosphooligonucleotide end-products.. In terms of biological role, endonuclease IV plays a role in DNA repair. It cleaves phosphodiester bonds at apurinic or apyrimidinic (AP) sites, generating a 3'-hydroxyl group and a 5'-terminal sugar phosphate. The protein is Probable endonuclease 4 of Salmonella typhimurium (strain LT2 / SGSC1412 / ATCC 700720).